The primary structure comprises 246 residues: Fasciclin-like arabinogalactan protein 11 (246 aa).

A signal peptide spans 1–24; the sequence is MATSRTFIFSNLFIFFLVIATTYG. The 146-residue stretch at 34–179 folds into the FAS1 domain; the sequence is PTNITAILEK…LAVYQVDQVL (146 aa). N-linked (GlcNAc...) asparagine glycosylation is found at Asn36, Asn68, Asn141, and Asn150. Positions 193-222 are disordered; the sequence is PAPEKGGSVSKGSASGGDDGGDSTDSSDAE. Ser219 carries the GPI-anchor amidated serine lipid modification. A propeptide spans 220–246 (removed in mature form); that stretch reads DAERTGFGFGIRITTVAAIAASSSLWI.

This sequence belongs to the fasciclin-like AGP family. In terms of tissue distribution, expressed in the sclerenchyma cells of inflorescence stems and siliques.

The protein resides in the cell membrane. In terms of biological role, may be a cell surface adhesion protein. This chain is Fasciclin-like arabinogalactan protein 11 (FLA11), found in Arabidopsis thaliana (Mouse-ear cress).